The following is a 670-amino-acid chain: DNA ligase (670 aa).

Residues 35–39, 84–85, and E116 each bind NAD(+); these read DSVYD and SL. The active-site N6-AMP-lysine intermediate is the K118. Residues R139, E176, K293, and K317 each contribute to the NAD(+) site. 4 residues coordinate Zn(2+): C411, C414, C429, and C435. The 79-residue stretch at 592-670 folds into the BRCT domain; sequence VVKSEIAGKT…EEAFLKLLKS (79 aa).

This sequence belongs to the NAD-dependent DNA ligase family. LigA subfamily. Mg(2+) serves as cofactor. Mn(2+) is required as a cofactor.

The enzyme catalyses NAD(+) + (deoxyribonucleotide)n-3'-hydroxyl + 5'-phospho-(deoxyribonucleotide)m = (deoxyribonucleotide)n+m + AMP + beta-nicotinamide D-nucleotide.. Its function is as follows. DNA ligase that catalyzes the formation of phosphodiester linkages between 5'-phosphoryl and 3'-hydroxyl groups in double-stranded DNA using NAD as a coenzyme and as the energy source for the reaction. It is essential for DNA replication and repair of damaged DNA. The protein is DNA ligase of Coxiella burnetii (strain Dugway 5J108-111).